A 248-amino-acid chain; its full sequence is Ribosomal RNA small subunit methyltransferase J (248 aa).

S-adenosyl-L-methionine is bound by residues 98–99, 114–115, 150–151, and Asp-168; these read RD, ER, and SS.

The protein belongs to the methyltransferase superfamily. RsmJ family.

It is found in the cytoplasm. The enzyme catalyses guanosine(1516) in 16S rRNA + S-adenosyl-L-methionine = N(2)-methylguanosine(1516) in 16S rRNA + S-adenosyl-L-homocysteine + H(+). Functionally, specifically methylates the guanosine in position 1516 of 16S rRNA. This is Ribosomal RNA small subunit methyltransferase J from Shewanella denitrificans (strain OS217 / ATCC BAA-1090 / DSM 15013).